Reading from the N-terminus, the 263-residue chain is Follistatin-related protein 3 (263 aa).

The first 26 residues, 1–26, serve as a signal peptide directing secretion; that stretch reads MRPGAPGPLWPLPWGALAWAVGFVSS. In terms of domain architecture, TB spans 36-107; that stretch reads GVCWLQQGQE…SCDGVECGPG (72 aa). 13 cysteine pairs are disulfide-bonded: Cys38–Cys61, Cys48–Cys92, Cys62–Cys95, Cys99–Cys110, Cys104–Cys119, Cys121–Cys153, Cys125–Cys146, Cys135–Cys167, Cys171–Cys182, Cys176–Cys192, Cys195–Cys229, Cys200–Cys222, and Cys211–Cys243. N-linked (GlcNAc...) asparagine glycosylation is present at Asn73. The Follistatin-like 1 domain occupies 99–119; sequence CDGVECGPGKACRMLGGRPRC. The Kazal-like 1 domain occupies 113–169; it reads LGGRPRCECAPDCSGLPARLQVCGSDGATYRDECELRAARCRGHPDLSVMYRGRCRK. Residues 170 to 193 enclose the Follistatin-like 2 domain; that stretch reads SCEHVVCPRPQSCVVDQTGSAHCV. Residues 189–245 form the Kazal-like 2 domain; the sequence is SAHCVVCRAAPCPVPSSPGQELCGNNNVTYISSCHMRQATCFLGRSIGVRHAGSCAG. Asn215 carries N-linked (GlcNAc...) asparagine glycosylation. The interval 242-263 is disordered; the sequence is SCAGTPEEPPGGESAEEEENFV. Phosphoserine; by FAM20C is present on Ser255.

In terms of assembly, interacts with INHBA and INHBB. Interacts with FN1. Interacts with ADAM12. Isoform 2 interacts with MLLT10; the interaction enhances MLLT10 in vitro transcriptional activity and self-association. Interacts with MSTN. In terms of tissue distribution, expressed in a wide range of tissues.

It localises to the secreted. The protein resides in the nucleus. In terms of biological role, isoform 1 or the secreted form is a binding and antagonizing protein for members of the TGF-beta family, such as activin, BMP2 and MSTN. Inhibits activin A-, activin B-, BMP2- and MSDT-induced cellular signaling; more effective on activin A than on activin B. Involved in bone formation; inhibits osteoclast differentiation. Involved in hematopoiesis; involved in differentiation of hemopoietic progenitor cells, increases hematopoietic cell adhesion to fibronectin and seems to contribute to the adhesion of hematopoietic precursor cells to the bone marrow stroma. Isoform 2 or the nuclear form is probably involved in transcriptional regulation via interaction with MLLT10. The polypeptide is Follistatin-related protein 3 (FSTL3) (Homo sapiens (Human)).